Here is a 690-residue protein sequence, read N- to C-terminus: MNSTSTVRQPGGPRQQRRHTPKANLSDLYQRAFKEAWVKLNPKIMVKNPVMFMVWVGTLITGMLTLNPNLFGVTGTSAMFNGLVTVILLFTVLFANFAEAVAEGRGKAQADALRSTQTQTYAQRILADGSLEMVSSTHLRKGDRIVVSVGDIIPADGEVLEGVASVDESAITGESAPVLKEPGSDVASSVTGGTRIISDELIIRVTADPGKGFIDRMIDLVEGAERSKTPNEIALTVLLAVLTLVFLIVVATLPPPANYIDSPVSITLLIALLVALIPTTIGGLLSAIGIAGMDRVAQFNVVATSGRAVEACGDINTLVLDKTGTITLGNRLAETFLPVNGHSLKEVAAIALAASIFDTTPEGKSIVRLAEKMGATLDFDRQQAEGVEFSARTRMSGTDLPDGSEVRKGAVDAIRGFVRSRGGKSPTGLDEAYGKVSHLGGTPLAVCRNDEIYGVIYLKDIIKPGIQERFNQLRRMGVRTVMLTGDNRITASVIAKEAGVDDFIAEATPEDKIQVIQQEQAAGKLVAMTGDGTNDAPALAQANVGLAMNSGTQAAKEAANMVDLDSDPTKLIDLVTIGKQLLITRGALTTFSLANDIAKYFAIIPAMFAGIGIGALNIMDLKSPQSAVLSALIYNALIIPALIPLALRGVKFRPLSADQLLQRNILVYGLGGIIVPFVAIKLIDLGISLL.

Residues 1–23 are disordered; sequence MNSTSTVRQPGGPRQQRRHTPKA. The next 4 helical transmembrane spans lie at 44–64, 78–98, 233–253, and 268–288; these read IMVK…TGML, AMFN…ANFA, IALT…VATL, and LLIA…LSAI. The active-site 4-aspartylphosphate intermediate is the aspartate 321. Residues aspartate 358, glutamate 362, 389 to 396, and lysine 408 each bind ATP; that span reads FSARTRMS. Residues aspartate 531 and aspartate 535 each coordinate Mg(2+). The next 3 membrane-spanning stretches (helical) occupy residues 601 to 621, 627 to 647, and 665 to 685; these read FAII…IMDL, AVLS…PLAL, and ILVY…LIDL.

Belongs to the cation transport ATPase (P-type) (TC 3.A.3) family. Type IA subfamily. In terms of assembly, the system is composed of three essential subunits: KdpA, KdpB and KdpC.

It is found in the cell inner membrane. It carries out the reaction K(+)(out) + ATP + H2O = K(+)(in) + ADP + phosphate + H(+). Part of the high-affinity ATP-driven potassium transport (or Kdp) system, which catalyzes the hydrolysis of ATP coupled with the electrogenic transport of potassium into the cytoplasm. This subunit is responsible for energy coupling to the transport system and for the release of the potassium ions to the cytoplasm. This Synechocystis sp. (strain ATCC 27184 / PCC 6803 / Kazusa) protein is Potassium-transporting ATPase ATP-binding subunit.